A 1023-amino-acid polypeptide reads, in one-letter code: NRPS-like oxidoreductase fscA (1023 aa).

Residues 54–454 (TYGDLNGMAT…NHPFVRQCMV (401 aa)) form an adenylation region. A Carrier domain is found at 554-637 (PEDDVIGRQI…SIANHVRSAQ (84 aa)). Ser596 is subject to O-(pantetheine 4'-phosphoryl)serine. The Thioester reductase (TE) domain maps to 685 to 901 (LTGGAGYLGQ…VYDESTTRAR (217 aa)).

The protein belongs to the NRP synthetase family. The cofactor is pantetheine 4'-phosphate.

It participates in secondary metabolite biosynthesis. NRPS-like oxidoreductasee; part of the fragmented gene cluster that mediates the biosynthesis of fusarochromene, a tryptophan-derived metabolite closely related to a group of mycotoxins including fusarochromanone. Within the pathway, fscA acts as an oxidoreductase that reduces the carboxyl group of 4-hydroxykyrunenine to primary alcohol. The first step of the pathway is the epimerization of L-tryptophan to D-tryptophan in the presence of the NRPS-like tryptophan epimerase fscC. D-tryptophan is subsequently hydroxylated by the tryptophan 6-hydroxylase fscE to yield 6-hydroxytryptophan. The pyrrole ring undergoes cleavaged by the tryptophan 2,3-dioxygenase fscD and is finally converted to 4-hydroxykyrunenine by the hydrolase fscH. The NRPS-like oxidoreductase fscA reduces the carboxyl group to primary alcohol and the DMATS-type prenyltransferase fscG performs prenylation, followed by the formation of a chromene ring catalyzed by the oxidoreductase fscI, which leads to desacetylfusarochromene. Epoxidation by fscF and rearrangement reactions of chromene double bonds convert compound desacetylfusarochromene to fusarochromanones. Although specific acetyltransferases were not found near the fsc gene cluster, several predicted enzymes containing the N-acetyltransferase superfamily domain are present in the genome of F.equiseti. These predicted enzymes may have the potential to convert desacetylfusarochromene to fusarochromene. The chain is NRPS-like oxidoreductase fscA from Fusarium equiseti (Fusarium scirpi).